A 524-amino-acid chain; its full sequence is Leucine-rich repeat-containing protein 1 (524 aa).

LRR repeat units follow at residues 11–34 (NRHV…IYRY), 35–58 (ARSL…FFQL), 60–81 (KLRK…IANF), 83–105 (QLVE…AFCK), 107–126 (LQVA…SFPE), 127–149 (LQNL…NIGN), 150–172 (LYNL…SLTQ), 173–196 (LRRL…IGAL), 198–218 (HLKD…EIGN), 219–242 (LKNL…ISGL), 244–264 (SLTY…GIGK), 265–288 (LKKL…IGDC), 290–310 (NLTE…SIGK), 311–334 (LKKL…IGGC), 336–356 (SLTM…EVSQ), 357–380 (AVEL…LTTL), and 382–405 (LKAL…IDRA). Positions 456–512 (SAIRFLEDEKDEDENETRTLQRRATPHPGELKNMKKTVENLRNDMNAAKGLDSNKNE) form a coiled coil. Residues 464-485 (EKDEDENETRTLQRRATPHPGE) are disordered. Position 480 is a phosphothreonine (Thr-480).

In terms of assembly, interacts with DLG1. May form a complex with DLG1 and ERBIN, where interaction between LRRC1 and ERBIN is indirect.

It is found in the cytoplasm. It localises to the membrane. The chain is Leucine-rich repeat-containing protein 1 (Lrrc1) from Mus musculus (Mouse).